The sequence spans 448 residues: Dual specificity mitogen-activated protein kinase kinase 5 (448 aa).

The interaction with MAPK7 stretch occupies residues Val-18 to Asn-25. Positions Val-18–Cys-109 constitute a PB1 domain. Positions Asp-64–Asp-68 are interaction with MAP3K2/MAP3K3. The tract at residues Asn-116–Ser-144 is disordered. Residues Ile-117–His-131 form an interaction with MAPK7 region. Positions Ala-126–Ser-144 are enriched in polar residues. Residues Ile-166 to Ile-419 enclose the Protein kinase domain. Residues Leu-172–Val-180 and Lys-195 each bind ATP. The Proton acceptor role is filled by Asp-283. Ser-311 carries the phosphoserine modification. A Phosphothreonine modification is found at Thr-315.

It belongs to the protein kinase superfamily. STE Ser/Thr protein kinase family. MAP kinase kinase subfamily. Interacts with PARD6A, MAP3K3 and MAPK7. Forms a complex with SQSTM1 and PRKCZ or PRKCI. Requires Mg(2+) as cofactor. Activated by phosphorylation on Ser/Thr by MAP kinase kinase kinases. Expressed in the liver and brain (at protein level). In terms of tissue distribution, expressed in the liver, muscle, testes, lung, kidney, spleen, heart and brain (at protein level).

The protein localises to the cytoplasm. Its subcellular location is the cytosol. The protein resides in the membrane. It carries out the reaction L-seryl-[protein] + ATP = O-phospho-L-seryl-[protein] + ADP + H(+). The enzyme catalyses L-threonyl-[protein] + ATP = O-phospho-L-threonyl-[protein] + ADP + H(+). It catalyses the reaction L-tyrosyl-[protein] + ATP = O-phospho-L-tyrosyl-[protein] + ADP + H(+). Its function is as follows. Acts as a scaffold for the formation of a ternary MAP3K2/MAP3K3-MAP3K5-MAPK7 signaling complex. Activation of this pathway appears to play a critical role in protecting cells from stress-induced apoptosis, neuronal survival and cardiac development and angiogenesis. As part of the MAPK/ERK signaling pathway, acts as a negative regulator of apoptosis in cardiomyocytes via promotion of STUB1/CHIP-mediated ubiquitination and degradation of ICER-type isoforms of CREM. This is Dual specificity mitogen-activated protein kinase kinase 5 (Map2k5) from Rattus norvegicus (Rat).